The following is a 213-amino-acid chain: MKAYQRQFIEFALNKQVLKFGEFTLKSGRTSPYFFNAGLFNTGRDLALLGRFYAEALVDSGIEFDLLFGPAYKGIPIATTTAVALAEHHERDVPYCFNRKEAKTHGEGGTLVGSPLQGRVMLVDDVITAGTAIRESMEIIGAGGATLAGVLISLDRQERGRADISAIQEVERDYHCKVISIVTLKDLIVYLEEKPEMADHLAAVRAYREQYGV.

K26 is a 5-phospho-alpha-D-ribose 1-diphosphate binding site. 34 to 35 (FF) is a binding site for orotate. 5-phospho-alpha-D-ribose 1-diphosphate contacts are provided by residues 72 to 73 (YK), R99, K100, K103, H105, and 124 to 132 (DDVITAGTA). Orotate is bound by residues T128 and R156.

The protein belongs to the purine/pyrimidine phosphoribosyltransferase family. PyrE subfamily. Homodimer. It depends on Mg(2+) as a cofactor.

It catalyses the reaction orotidine 5'-phosphate + diphosphate = orotate + 5-phospho-alpha-D-ribose 1-diphosphate. Its pathway is pyrimidine metabolism; UMP biosynthesis via de novo pathway; UMP from orotate: step 1/2. Functionally, catalyzes the transfer of a ribosyl phosphate group from 5-phosphoribose 1-diphosphate to orotate, leading to the formation of orotidine monophosphate (OMP). In Serratia proteamaculans (strain 568), this protein is Orotate phosphoribosyltransferase.